Reading from the N-terminus, the 43-residue chain is Metallothionein B (43 aa).

Residues 1–16 (SCAGSCKCKNCRCRSC) are beta. Residues Cys-2, Cys-6, Cys-8, Cys-11, Cys-13, Cys-16, Cys-20, Cys-21, Cys-23, Cys-24, Cys-28, Cys-31, Cys-35, and Cys-37 each coordinate a divalent metal cation. Positions 17–43 (RKSCCSCCPAGCNNCVKGCVCKEPASS) are alpha.

It belongs to the metallothionein superfamily. Type 1 family.

Functionally, metallothioneins have a high content of cysteine residues that bind various heavy metals. The protein is Metallothionein B of Colinus virginianus (Northern bobwhite).